Here is a 258-residue protein sequence, read N- to C-terminus: Polysialic acid transport protein KpsM (258 aa).

Over 1–30 the chain is Cytoplasmic; the sequence is MARSGFEVQKVTVEALFLREIRTRFGKFRL. The ABC transmembrane type-2 domain occupies 30–251; that stretch reads LGYLWAILEP…FIGLALYRTR (222 aa). Residues 31–54 traverse the membrane as a helical segment; it reads GYLWAILEPSAHLLILLGILGYVM. The Periplasmic segment spans residues 55-61; sequence HRTMPDI. Residues 62 to 81 traverse the membrane as a helical segment; sequence SFPVFLLNGLIPFFIFSSIS. Over 82–108 the chain is Cytoplasmic; sequence KRSIGAIEANQGLFNYRPVKPIDTIIA. A helical transmembrane segment spans residues 109–132; it reads RALLETLIYVAVYILLMLIVWMTG. The Periplasmic portion of the chain corresponds to 133-143; it reads EYFEITNFLQL. The chain crosses the membrane as a helical span at residues 144–165; it reads VLTWSLLIILSCGVGLIFMVVG. At 166-174 the chain is on the cytoplasmic side; that stretch reads KTFPEMQKV. A helical transmembrane segment spans residues 175 to 195; that stretch reads LPILLKPLYFISCIMFPLHSI. The Periplasmic portion of the chain corresponds to 196–226; sequence PKQYWSYLLWNPLVHVVELSREAVMPGYISE. A helical transmembrane segment spans residues 227–247; sequence GVSLNYLAMFTLVTLFIGLAL. At 248-258 the chain is on the cytoplasmic side; it reads YRTREEAMLTS.

The protein belongs to the ABC-2 integral membrane protein family.

The protein localises to the cell inner membrane. Its function is as follows. KpsM and KpsT constitute a system for the transport of polysialic acid across the cytoplasmic membrane. In Escherichia coli, this protein is Polysialic acid transport protein KpsM (kpsM).